Here is a 91-residue protein sequence, read N- to C-terminus: MFPTYSKIVEVVFSQIIANNMFEKLDNAAELRIHAQVTHVLNTLLPDQVDSIAITLYPGSAHIIVVFGLDAELVIKGDIRFESQTAEFKAI.

This is an uncharacterized protein from Escherichia coli (Bacteriophage T4).